Here is a 274-residue protein sequence, read N- to C-terminus: Ribulose-phosphate 3-epimerase, chloroplastic (274 aa).

Residues 1–39 (MASPSSSSSLCSTFASPRAASLGRRLAFSSPRKAFRVRA) constitute a chloroplast transit peptide. A substrate-binding site is contributed by Ser56. A divalent metal cation is bound by residues His81, Asp83, and His114. The Proton acceptor role is filled by Asp83. Substrate is bound by residues His114, 192-195 (GFGG), 225-227 (DGG), and 247-248 (GS). Asp225 serves as a coordination point for a divalent metal cation. Asp225 (proton donor) is an active-site residue.

It belongs to the ribulose-phosphate 3-epimerase family. In terms of assembly, homooctamer. It depends on Co(2+) as a cofactor. Fe(2+) serves as cofactor. Mn(2+) is required as a cofactor. The cofactor is Zn(2+).

It is found in the plastid. Its subcellular location is the chloroplast thylakoid membrane. The catalysed reaction is D-ribulose 5-phosphate = D-xylulose 5-phosphate. It functions in the pathway carbohydrate biosynthesis; Calvin cycle. Functionally, catalyzes the reversible epimerization of D-ribulose 5-phosphate to D-xylulose 5-phosphate. In Oryza sativa subsp. japonica (Rice), this protein is Ribulose-phosphate 3-epimerase, chloroplastic (RPE).